The chain runs to 502 residues: CDP-diacylglycerol--glycerol-3-phosphate 3-phosphatidyltransferase (502 aa).

Residue serine 58 to glutamate 65 participates in ATP binding. 2 consecutive PLD phosphodiesterase domains span residues glycine 143–tyrosine 169 and lysine 410–serine 443. Active-site residues include histidine 148, lysine 150, and aspartate 155.

The protein belongs to the CDP-alcohol phosphatidyltransferase class-II family.

Its subcellular location is the mitochondrion. The enzyme catalyses a CDP-1,2-diacyl-sn-glycerol + sn-glycerol 3-phosphate = a 1,2-diacyl-sn-glycero-3-phospho-(1'-sn-glycero-3'-phosphate) + CMP + H(+). Its pathway is phospholipid metabolism; phosphatidylglycerol biosynthesis; phosphatidylglycerol from CDP-diacylglycerol: step 1/2. Functionally, functions in the biosynthesis of the anionic phospholipids phosphatidylglycerol and cardiolipin. This is CDP-diacylglycerol--glycerol-3-phosphate 3-phosphatidyltransferase (pgs1) from Schizosaccharomyces pombe (strain 972 / ATCC 24843) (Fission yeast).